Reading from the N-terminus, the 187-residue chain is Ribonuclease HII (187 aa).

The RNase H type-2 domain occupies 1–187 (MIILGIDEAG…YKPVQVLLNE (187 aa)). Residues aspartate 7, glutamate 8, and aspartate 99 each coordinate a divalent metal cation.

The protein belongs to the RNase HII family. It depends on Mn(2+) as a cofactor. Requires Mg(2+) as cofactor.

It is found in the cytoplasm. The enzyme catalyses Endonucleolytic cleavage to 5'-phosphomonoester.. Its function is as follows. Endonuclease that specifically degrades the RNA of RNA-DNA hybrids. This chain is Ribonuclease HII, found in Francisella tularensis subsp. holarctica (strain FTNF002-00 / FTA).